The following is a 291-amino-acid chain: uncharacterized protein (291 aa).

The interval 77 to 140 (TVPQSSPTAI…PPTPVVEKSP (64 aa)) is disordered. The segment covering 125-134 (PVTPAHPPTP) has biased composition (pro residues).

This is an uncharacterized protein from Synechocystis sp. (strain ATCC 27184 / PCC 6803 / Kazusa).